The sequence spans 176 residues: NAD(P)H-quinone oxidoreductase subunit 6, chloroplastic (176 aa).

5 helical membrane-spanning segments follow: residues 10-30, 32-52, 61-81, 92-112, and 152-172; these read FLLVFLGSGLLVGGLGVVLLP, PIFSAFSLGFVLVCISLLYIL, AQLLIYVGAINVLIIFAVMFM, LWTIGNGITSLVCTTILFLLM, and FFLPFELISIILLVALIGAIS.

The protein belongs to the complex I subunit 6 family. As to quaternary structure, NDH is composed of at least 16 different subunits, 5 of which are encoded in the nucleus.

The protein resides in the plastid. Its subcellular location is the chloroplast thylakoid membrane. It catalyses the reaction a plastoquinone + NADH + (n+1) H(+)(in) = a plastoquinol + NAD(+) + n H(+)(out). It carries out the reaction a plastoquinone + NADPH + (n+1) H(+)(in) = a plastoquinol + NADP(+) + n H(+)(out). Functionally, NDH shuttles electrons from NAD(P)H:plastoquinone, via FMN and iron-sulfur (Fe-S) centers, to quinones in the photosynthetic chain and possibly in a chloroplast respiratory chain. The immediate electron acceptor for the enzyme in this species is believed to be plastoquinone. Couples the redox reaction to proton translocation, and thus conserves the redox energy in a proton gradient. This is NAD(P)H-quinone oxidoreductase subunit 6, chloroplastic (ndhG) from Arabidopsis thaliana (Mouse-ear cress).